Consider the following 457-residue polypeptide: L-lysine-epsilon aminotransferase (457 aa).

Residues glycine 131 and alanine 132 each contribute to the pyridoxal 5'-phosphate site. 2 residues coordinate 2-oxoglutarate: arginine 172 and glutamine 278. Arginine 172 is an L-lysine binding site. Pyridoxal 5'-phosphate is bound at residue glutamine 278. Lysine 304 is modified (N6-(pyridoxal phosphate)lysine). Residue arginine 427 coordinates 2-oxoglutarate.

This sequence belongs to the class-III pyridoxal-phosphate-dependent aminotransferase family. Monomer. Requires pyridoxal 5'-phosphate as cofactor.

It catalyses the reaction L-lysine + 2-oxoglutarate = (S)-2-amino-6-oxohexanoate + L-glutamate. It functions in the pathway antibiotic biosynthesis; cephamycin C biosynthesis. With respect to regulation, activity is induced in the presence of high concentrations of lysine, but not by L-alpha-aminoadipic acid. Not repressed by ammonium ions. In terms of biological role, catalyzes the transfer of the terminal amino group of L-lysine to alpha-ketoglutarate to yield L-glutamate and 2-aminoadipate 6-semialdehyde ((S)-2-amino-6-oxohexanoate), which is spontaneously converted to the dehydrated form 1-piperideine 6-carboxylate. Shows a high specificity for L-lysine as substrate although L-ornithine can also be used, leading to the formation of an o-aminobenzaldehyde reactive compound. Only cis-oxaloacetate and pyruvate can replace alpha-ketoglutarate, but with very low efficiency. The chain is L-lysine-epsilon aminotransferase from Streptomyces clavuligerus.